The sequence spans 697 residues: Lebercilin (697 aa).

Residues 1–90 (MGERAGSPGT…VGFRSQSLNR (90 aa)) form a disordered region. Phosphoserine occurs at positions 7 and 45. The segment covering 32–45 (SSGRSSLVSSSPAS) has biased composition (low complexity). 2 coiled-coil regions span residues 103–297 (RILS…IKNI) and 389–485 (EEKF…RNLK). 3 disordered regions span residues 412–432 (WERE…EREE), 522–548 (HHLQ…PASP), and 606–697 (EQLF…VALR). A compositionally biased stretch (basic and acidic residues) spans 416 to 432 (ELDKKQKEKASLLEREE). The span at 527–547 (ISFSTPKGEGQNSGNVRSPAS) shows a compositional bias: polar residues. Residues 612–626 (SGSSTISSKSSDPNS) show a composition bias toward low complexity. Acidic residues predominate over residues 686 to 697 (SVEDEIEEVALR).

The protein belongs to the LCA5 family. In terms of assembly, interacts with NINL. Interacts with OFD1. Interacts with FAM161A. Interacts with components of the IFT complex B. In terms of tissue distribution, widely expressed.

It is found in the cytoplasm. It localises to the cytoskeleton. Its subcellular location is the cilium axoneme. The protein resides in the cilium basal body. The protein localises to the microtubule organizing center. It is found in the centrosome. It localises to the cell projection. Its subcellular location is the cilium. Involved in intraflagellar protein (IFT) transport in photoreceptor cilia. The polypeptide is Lebercilin (LCA5) (Homo sapiens (Human)).